Consider the following 1676-residue polypeptide: Protein TIC 214 (1676 aa).

6 helical membrane passes run 24–44 (KIINSVILAGLYYGFLTALAL), 70–90 (LILGQLGQFLSIYYAPLYIAF), 93–113 (PYTLTVLTLIYFLVNLFGNNL), 130–150 (LEILCIFLNNLILQLLNTCIF), 170–190 (MVFLISSFSAWLIGQILVLMC), and 218–238 (FFLVVNCLFGSSLFILTIQSL). Basic and acidic residues-rich tracts occupy residues 264-276 (LKKSGVAKEGKST) and 283-298 (SHEKDSFKKEPYSKLE). 4 disordered regions span residues 264–302 (LKKSGVAKEGKSTEDEEDLSHEKDSFKKEPYSKLENEDE), 546–610 (LVVF…SYSI), 1123–1151 (NKQSLQKGNSKGNSNLDDSKNRNKNNLIL), and 1372–1436 (QQQN…SEDD). Polar residues predominate over residues 562–586 (DSGNIQNKSSDKTINPQNNLTNSKT). Residues 597–610 (TTEKEPKDDKSYSI) are compositionally biased toward basic and acidic residues. Positions 1123-1138 (NKQSLQKGNSKGNSNL) are enriched in polar residues. A compositionally biased stretch (low complexity) spans 1372–1390 (QQQNQTTTKINTETKNQQK). Residues 1384-1436 (ETKNQQKNRVENEENKETENQQNAETKNKQKSKTENEENKETENQQNDESEDD) adopt a coiled-coil conformation. 2 stretches are compositionally biased toward basic and acidic residues: residues 1391 to 1402 (NRVENEENKETE) and 1409 to 1426 (TKNKQKSKTENEENKETE).

The protein belongs to the TIC214 family. In terms of assembly, part of the Tic complex.

It localises to the plastid. The protein localises to the chloroplast inner membrane. Involved in protein precursor import into chloroplasts. May be part of an intermediate translocation complex acting as a protein-conducting channel at the inner envelope. This Cuscuta obtusiflora (Peruvian dodder) protein is Protein TIC 214.